The sequence spans 330 residues: 2-phospho-L-lactate transferase (330 aa).

D49 is a 7,8-didemethyl-8-hydroxy-5-deazariboflavin binding site.

This sequence belongs to the CofD family. As to quaternary structure, homodimer. Mg(2+) is required as a cofactor.

It catalyses the reaction (2S)-lactyl-2-diphospho-5'-guanosine + 7,8-didemethyl-8-hydroxy-5-deazariboflavin = oxidized coenzyme F420-0 + GMP + H(+). It participates in cofactor biosynthesis; coenzyme F420 biosynthesis. Catalyzes the transfer of the 2-phospholactate moiety from (2S)-lactyl-2-diphospho-5'-guanosine to 7,8-didemethyl-8-hydroxy-5-deazariboflavin (FO) with the formation of oxidized coenzyme F420-0 and GMP. This Haloarcula marismortui (strain ATCC 43049 / DSM 3752 / JCM 8966 / VKM B-1809) (Halobacterium marismortui) protein is 2-phospho-L-lactate transferase.